We begin with the raw amino-acid sequence, 968 residues long: RNA polymerase-associated protein RapA (968 aa).

Positions 163-332 (EVGRRYAPRV…FARLRLLDPD (170 aa)) constitute a Helicase ATP-binding domain. 176 to 183 (DEVGLGKT) provides a ligand contact to ATP. Positions 278-281 (DEAH) match the DEAH box motif. Positions 491–655 (RVDWLIEFLK…EFAEDLLNVL (165 aa)) constitute a Helicase C-terminal domain.

Belongs to the SNF2/RAD54 helicase family. RapA subfamily. In terms of assembly, interacts with the RNAP. Has a higher affinity for the core RNAP than for the holoenzyme. Its ATPase activity is stimulated by binding to RNAP.

Its function is as follows. Transcription regulator that activates transcription by stimulating RNA polymerase (RNAP) recycling in case of stress conditions such as supercoiled DNA or high salt concentrations. Probably acts by releasing the RNAP, when it is trapped or immobilized on tightly supercoiled DNA. Does not activate transcription on linear DNA. Probably not involved in DNA repair. This chain is RNA polymerase-associated protein RapA, found in Shewanella baltica (strain OS155 / ATCC BAA-1091).